Reading from the N-terminus, the 185-residue chain is Large ribosomal subunit protein uL18 (185 aa).

The protein belongs to the universal ribosomal protein uL18 family. In terms of assembly, part of the 50S ribosomal subunit. Contacts the 5S and 23S rRNAs.

This is one of the proteins that bind and probably mediate the attachment of the 5S RNA into the large ribosomal subunit, where it forms part of the central protuberance. This is Large ribosomal subunit protein uL18 from Halorubrum lacusprofundi (strain ATCC 49239 / DSM 5036 / JCM 8891 / ACAM 34).